Here is a 399-residue protein sequence, read N- to C-terminus: Arylacetamide deacetylase (399 aa).

Topologically, residues 1 to 4 are cytoplasmic; sequence MRKK. A helical; Signal-anchor for type II membrane protein transmembrane segment spans residues 5-25; the sequence is YFGFLILGVLLAGYIYVPLPD. Topologically, residues 26–399 are lumenal; the sequence is NVEEPWKIML…QYINWLHENL (374 aa). Residues 111 to 113 carry the Involved in the stabilization of the negatively charged intermediate by the formation of the oxyanion hole motif; sequence HGG. An intrachain disulfide couples Cys116 to Cys340. Ser189 is an active-site residue. Asn282 carries N-linked (GlcNAc...) asparagine glycosylation. Active-site residues include Asp343 and His373.

It belongs to the 'GDXG' lipolytic enzyme family.

It localises to the endoplasmic reticulum membrane. The protein resides in the microsome membrane. The catalysed reaction is a triacylglycerol + H2O = a diacylglycerol + a fatty acid + H(+). Its function is as follows. Displays cellular triglyceride lipase activity in liver, increases the levels of intracellular fatty acids derived from the hydrolysis of newly formed triglyceride stores and plays a role in very low-density lipoprotein assembly. Displays serine esterase activity in liver. Deacetylates a variety of arylacetamide substrates, including xenobiotic compounds and procarcinogens, converting them to the primary arylamide compounds and increasing their toxicity. In Bos taurus (Bovine), this protein is Arylacetamide deacetylase (AADAC).